Reading from the N-terminus, the 541-residue chain is Arginine--tRNA ligase (541 aa).

The 'HIGH' region signature appears at 119–129; that stretch reads ANPTGPLHIGH.

Belongs to the class-I aminoacyl-tRNA synthetase family. Monomer.

The protein resides in the cytoplasm. It carries out the reaction tRNA(Arg) + L-arginine + ATP = L-arginyl-tRNA(Arg) + AMP + diphosphate. The polypeptide is Arginine--tRNA ligase (argS) (Helicobacter pylori (strain J99 / ATCC 700824) (Campylobacter pylori J99)).